An 886-amino-acid chain; its full sequence is Alanine--tRNA ligase (886 aa).

H564, H568, C676, and H680 together coordinate Zn(2+).

Belongs to the class-II aminoacyl-tRNA synthetase family. Zn(2+) is required as a cofactor.

It is found in the cytoplasm. The catalysed reaction is tRNA(Ala) + L-alanine + ATP = L-alanyl-tRNA(Ala) + AMP + diphosphate. Functionally, catalyzes the attachment of alanine to tRNA(Ala) in a two-step reaction: alanine is first activated by ATP to form Ala-AMP and then transferred to the acceptor end of tRNA(Ala). Also edits incorrectly charged Ser-tRNA(Ala) and Gly-tRNA(Ala) via its editing domain. The polypeptide is Alanine--tRNA ligase (Methylobacterium sp. (strain 4-46)).